Consider the following 169-residue polypeptide: UPF0303 protein BruAb1_1406 (169 aa).

The protein belongs to the UPF0303 family.

This is UPF0303 protein BruAb1_1406 from Brucella abortus biovar 1 (strain 9-941).